We begin with the raw amino-acid sequence, 654 residues long: MAQISLTFPDGNARDFDAGVTPAEVAASISTSLGKKAISATVNGAHHDLQWPIDADASIAIHTLKDDAQALELIRHDCAHIMARAVQEIWPDVKVTIGPVIENGFYYDFDRAEPFTPEDLGAIEAKMKEIINARDPVRTEVWDRPRAIAHYEANGEPYKVELIEAIPGNEPLRMYWHGDWQDLCRGPHLQHTGQVPADSFKLMSVAGAYWRGDSSRPMLQRIYGVAFQNRDALKKHLHMLEEAAKRDHRKLGREMNLFHMQEEAPGQVFWHPNGWTVYTTLQDYMRRRQRENGYVEVNTPQVVDRKLWEASGHWDKYQENMFIVEVDEEHAREKAINALKPMNCPCHVQVYNQGLKSYRDLPLRMAEFGACNRYEPSGALHGLMRVRGFTQDDAHIFCTEDQIQDETARFIRMLSTIYRDLGFESFDIKFSTRPEVRAGSDAVWDKAEAALEAAIRTVTDDFELDPGEGAFYGPKLDFKLTDAIGREWQLGTFQADFVLPERLDATYIGEDGAKHRPVMLHRAILGSFERFLGILIENFAGKLPFWLAPRQVVVASIISEADDYVREVVAALTRAGIRAEADIRNEKINYKVREHSVGKVPVILAVGRREMEERTVTLRRLGEKQTSVVGLDALVADLAAEATPPDQRPDQPAV.

The 63-residue stretch at 1-63 (MAQISLTFPD…DADASIAIHT (63 aa)) folds into the TGS domain. A catalytic region spans residues 247–544 (DHRKLGREMN…LIENFAGKLP (298 aa)). Zn(2+)-binding residues include Cys-344, His-395, and His-521.

It belongs to the class-II aminoacyl-tRNA synthetase family. In terms of assembly, homodimer. Zn(2+) is required as a cofactor.

It localises to the cytoplasm. The enzyme catalyses tRNA(Thr) + L-threonine + ATP = L-threonyl-tRNA(Thr) + AMP + diphosphate + H(+). Its function is as follows. Catalyzes the attachment of threonine to tRNA(Thr) in a two-step reaction: L-threonine is first activated by ATP to form Thr-AMP and then transferred to the acceptor end of tRNA(Thr). Also edits incorrectly charged L-seryl-tRNA(Thr). The polypeptide is Threonine--tRNA ligase (Dinoroseobacter shibae (strain DSM 16493 / NCIMB 14021 / DFL 12)).